The chain runs to 198 residues: Small ribosomal subunit protein uS2 (198 aa).

It belongs to the universal ribosomal protein uS2 family.

This chain is Small ribosomal subunit protein uS2 (rps2), found in Methanothermobacter thermautotrophicus (strain ATCC 29096 / DSM 1053 / JCM 10044 / NBRC 100330 / Delta H) (Methanobacterium thermoautotrophicum).